The chain runs to 116 residues: Putative pterin-4-alpha-carbinolamine dehydratase (116 aa).

It belongs to the pterin-4-alpha-carbinolamine dehydratase family.

The catalysed reaction is (4aS,6R)-4a-hydroxy-L-erythro-5,6,7,8-tetrahydrobiopterin = (6R)-L-erythro-6,7-dihydrobiopterin + H2O. The sequence is that of Putative pterin-4-alpha-carbinolamine dehydratase from Paracidovorax citrulli (strain AAC00-1) (Acidovorax citrulli).